Reading from the N-terminus, the 61-residue chain is Protein YncO (61 aa).

A helical membrane pass occupies residues 18–38; it reads HVFLYVFYIFLFLVLFIMTIY.

Its subcellular location is the cell inner membrane. This Escherichia coli (strain K12) protein is Protein YncO.